A 219-amino-acid chain; its full sequence is Capsid protein (219 aa).

A nuclear localization signals region spans residues 5 to 29; it reads RRRRVVRRRKPVRRLRRRRRRFFKR.

Belongs to the circoviridae capsid protein family. Homomultimer. Assembles in the nucleus, presumably in an immature form, then migrates to the cytoplasm once assembled as mature virion. Interacts with Rep; this interaction relocates Rep into the nucleus.

It is found in the host nucleus. The protein localises to the virion. In terms of biological role, self-assembles to form the virion icosahedral capsid with a T=1 symmetry. This very small capsid (17-22 nm in diameter) allows the virus to be very stable in the environment and resistant to some disinfectants, including detergents. Essential for the initial attachment to heparan sulfate moieties and chondroitin sulfate B of the host cell surface proteoglycans. After attachment, the virus is endocytosed and traffics to the nucleus. The capsid protein binds and transports the viral genome and Rep across the nuclear envelope. In Homo sapiens (Human), this protein is Capsid protein (Cap).